Here is a 195-residue protein sequence, read N- to C-terminus: uncharacterized protein (195 aa).

Disordered stretches follow at residues 1-54 (MPKG…SNKI) and 173-195 (LAGA…KPIS). Residues 7–20 (KPNEKKEELEKFAK) show a composition bias toward basic and acidic residues. Polar residues predominate over residues 45–54 (QNDSSSSNKI). Residues 48–97 (SSSSNKIVLSQAEKDLLRTELDKTEEEISTLKQVLSARQKHAAELKRKLG) adopt a coiled-coil conformation.

This sequence belongs to the TPD52 family.

This is an uncharacterized protein from Caenorhabditis elegans.